A 123-amino-acid chain; its full sequence is Large ribosomal subunit protein bL12 (123 aa).

Belongs to the bacterial ribosomal protein bL12 family. As to quaternary structure, homodimer. Part of the ribosomal stalk of the 50S ribosomal subunit. Forms a multimeric L10(L12)X complex, where L10 forms an elongated spine to which 2 to 4 L12 dimers bind in a sequential fashion. Binds GTP-bound translation factors.

Forms part of the ribosomal stalk which helps the ribosome interact with GTP-bound translation factors. Is thus essential for accurate translation. This chain is Large ribosomal subunit protein bL12, found in Rhodospirillum rubrum (strain ATCC 11170 / ATH 1.1.1 / DSM 467 / LMG 4362 / NCIMB 8255 / S1).